The primary structure comprises 364 residues: Putative [LysW]-aminoadipate semialdehyde/glutamate semialdehyde transaminase (364 aa).

Pyridoxal 5'-phosphate is bound by residues 90–91 and Phe117; that span reads GT. Substrate is bound at residue Arg120. 202 to 205 is a pyridoxal 5'-phosphate binding site; the sequence is DEVQ. Lys230 is modified (N6-(pyridoxal phosphate)lysine). Ser254 contacts substrate. Thr255 is a binding site for pyridoxal 5'-phosphate.

Belongs to the class-III pyridoxal-phosphate-dependent aminotransferase family. LysJ subfamily. As to quaternary structure, homodimer. Pyridoxal 5'-phosphate serves as cofactor.

The protein localises to the cytoplasm. It catalyses the reaction [amino-group carrier protein]-C-terminal-gamma-(L-lysyl)-L-glutamate + 2-oxoglutarate = [amino-group carrier protein]-C-terminal-N-(1-carboxy-5-oxopentan-1-yl)-L-glutamine + L-glutamate. The enzyme catalyses [amino-group carrier protein]-C-terminal-gamma-(L-ornithyl)-L-glutamate + 2-oxoglutarate = [amino-group carrier protein]-C-terminal-gamma-(L-glutamyl-5-semialdehyde)-L-glutamate + L-glutamate. It participates in amino-acid biosynthesis; L-lysine biosynthesis via AAA pathway; L-lysine from L-alpha-aminoadipate (Thermus route): step 4/5. The protein operates within amino-acid biosynthesis; L-arginine biosynthesis. In terms of biological role, involved in both the arginine and lysine biosynthetic pathways. This Pyrococcus abyssi (strain GE5 / Orsay) protein is Putative [LysW]-aminoadipate semialdehyde/glutamate semialdehyde transaminase.